A 446-amino-acid polypeptide reads, in one-letter code: Maltoporin (446 aa).

The first 25 residues, 1 to 25, serve as a signal peptide directing secretion; it reads MMITLRKLPLAVAVAAGVMSAQAMA.

It belongs to the porin LamB (TC 1.B.3) family. In terms of assembly, homotrimer formed of three 18-stranded antiparallel beta-barrels, containing three independent channels.

The protein localises to the cell outer membrane. It catalyses the reaction beta-maltose(in) = beta-maltose(out). Involved in the transport of maltose and maltodextrins. The sequence is that of Maltoporin from Escherichia coli O157:H7 (strain EC4115 / EHEC).